Reading from the N-terminus, the 862-residue chain is Leucine--tRNA ligase (862 aa).

The 'HIGH' region motif lies at 44-54; sequence PYPSGRIHMGH. Residues 622-626 carry the 'KMSKS' region motif; it reads KMSKS. K625 is a binding site for ATP.

It belongs to the class-I aminoacyl-tRNA synthetase family.

Its subcellular location is the cytoplasm. It catalyses the reaction tRNA(Leu) + L-leucine + ATP = L-leucyl-tRNA(Leu) + AMP + diphosphate. The polypeptide is Leucine--tRNA ligase (Rhodospirillum rubrum (strain ATCC 11170 / ATH 1.1.1 / DSM 467 / LMG 4362 / NCIMB 8255 / S1)).